The sequence spans 249 residues: 23S rRNA (guanosine-2'-O-)-methyltransferase RlmB (249 aa).

S-adenosyl-L-methionine contacts are provided by glycine 200, isoleucine 220, and leucine 229.

It belongs to the class IV-like SAM-binding methyltransferase superfamily. RNA methyltransferase TrmH family. RlmB subfamily.

It localises to the cytoplasm. It carries out the reaction guanosine(2251) in 23S rRNA + S-adenosyl-L-methionine = 2'-O-methylguanosine(2251) in 23S rRNA + S-adenosyl-L-homocysteine + H(+). In terms of biological role, specifically methylates the ribose of guanosine 2251 in 23S rRNA. This is 23S rRNA (guanosine-2'-O-)-methyltransferase RlmB from Xanthomonas campestris pv. campestris (strain ATCC 33913 / DSM 3586 / NCPPB 528 / LMG 568 / P 25).